The following is a 95-amino-acid chain: Aspartyl/glutamyl-tRNA(Asn/Gln) amidotransferase subunit C (95 aa).

This sequence belongs to the GatC family. As to quaternary structure, heterotrimer of A, B and C subunits.

The catalysed reaction is L-glutamyl-tRNA(Gln) + L-glutamine + ATP + H2O = L-glutaminyl-tRNA(Gln) + L-glutamate + ADP + phosphate + H(+). The enzyme catalyses L-aspartyl-tRNA(Asn) + L-glutamine + ATP + H2O = L-asparaginyl-tRNA(Asn) + L-glutamate + ADP + phosphate + 2 H(+). Its function is as follows. Allows the formation of correctly charged Asn-tRNA(Asn) or Gln-tRNA(Gln) through the transamidation of misacylated Asp-tRNA(Asn) or Glu-tRNA(Gln) in organisms which lack either or both of asparaginyl-tRNA or glutaminyl-tRNA synthetases. The reaction takes place in the presence of glutamine and ATP through an activated phospho-Asp-tRNA(Asn) or phospho-Glu-tRNA(Gln). The protein is Aspartyl/glutamyl-tRNA(Asn/Gln) amidotransferase subunit C of Nitrosococcus oceani (strain ATCC 19707 / BCRC 17464 / JCM 30415 / NCIMB 11848 / C-107).